We begin with the raw amino-acid sequence, 41 residues long: Photosystem II reaction center protein X (41 aa).

Residues 2 to 6 lie on the Lumenal side of the membrane; it reads TITPS. A helical transmembrane segment spans residues 7 to 29; that stretch reads LKGFFIGLLSGAVVLGLTFAVLI. At 30 to 41 the chain is on the cytoplasmic side; that stretch reads AISQIDKVQRSL.

Belongs to the PsbX family. Type 1 subfamily. In terms of assembly, PSII is composed of 1 copy each of membrane proteins PsbA, PsbB, PsbC, PsbD, PsbE, PsbF, PsbH, PsbI, PsbJ, PsbK, PsbL, PsbM, PsbT, PsbX, PsbY, PsbZ, Psb30/Ycf12, peripheral proteins PsbO, CyanoQ (PsbQ), PsbU, PsbV and a large number of cofactors. It forms dimeric complexes. Part of a photosystem II (PSII) assembly intermediate complex PSII-I; crystallized from a strain deleted of psbJ, it forms monomeric PSII before addition of the oxygen evolving complex. PSII-I includes 3 assembly factors not found in mature PSII (Psb27, Psb28 and Psb34). It depends on PSII binds multiple chlorophylls, carotenoids and specific lipids. as a cofactor.

Its subcellular location is the cellular thylakoid membrane. Functionally, involved in the binding and/or turnover of quinones at the Q(B) site of photosystem II (PSII). PSII is a light-driven water plastoquinone oxidoreductase, using light energy to abstract electrons from H(2)O, generating a proton gradient subsequently used for ATP formation. This is Photosystem II reaction center protein X from Thermosynechococcus vestitus (strain NIES-2133 / IAM M-273 / BP-1).